The primary structure comprises 104 residues: Large ribosomal subunit protein uL24 (104 aa).

The protein belongs to the universal ribosomal protein uL24 family. In terms of assembly, part of the 50S ribosomal subunit.

One of two assembly initiator proteins, it binds directly to the 5'-end of the 23S rRNA, where it nucleates assembly of the 50S subunit. In terms of biological role, one of the proteins that surrounds the polypeptide exit tunnel on the outside of the subunit. The sequence is that of Large ribosomal subunit protein uL24 from Colwellia psychrerythraea (strain 34H / ATCC BAA-681) (Vibrio psychroerythus).